We begin with the raw amino-acid sequence, 368 residues long: Anhydro-N-acetylmuramic acid kinase (368 aa).

13–20 (GTSLDGVD) contributes to the ATP binding site.

This sequence belongs to the anhydro-N-acetylmuramic acid kinase family.

It catalyses the reaction 1,6-anhydro-N-acetyl-beta-muramate + ATP + H2O = N-acetyl-D-muramate 6-phosphate + ADP + H(+). It participates in amino-sugar metabolism; 1,6-anhydro-N-acetylmuramate degradation. Its pathway is cell wall biogenesis; peptidoglycan recycling. Catalyzes the specific phosphorylation of 1,6-anhydro-N-acetylmuramic acid (anhMurNAc) with the simultaneous cleavage of the 1,6-anhydro ring, generating MurNAc-6-P. Is required for the utilization of anhMurNAc either imported from the medium or derived from its own cell wall murein, and thus plays a role in cell wall recycling. This is Anhydro-N-acetylmuramic acid kinase from Hahella chejuensis (strain KCTC 2396).